A 152-amino-acid chain; its full sequence is Deoxyuridine 5'-triphosphate nucleotidohydrolase (152 aa).

Substrate is bound by residues 71-73 (RSG), N84, 88-90 (LID), and K98.

This sequence belongs to the dUTPase family. The cofactor is Mg(2+).

The enzyme catalyses dUTP + H2O = dUMP + diphosphate + H(+). It functions in the pathway pyrimidine metabolism; dUMP biosynthesis; dUMP from dCTP (dUTP route): step 2/2. In terms of biological role, this enzyme is involved in nucleotide metabolism: it produces dUMP, the immediate precursor of thymidine nucleotides and it decreases the intracellular concentration of dUTP so that uracil cannot be incorporated into DNA. The chain is Deoxyuridine 5'-triphosphate nucleotidohydrolase from Legionella pneumophila (strain Paris).